The sequence spans 122 residues: UPF0382 membrane protein SE_0353 (122 aa).

Transmembrane regions (helical) follow at residues 3–23, 46–66, 69–89, and 98–118; these read VFII…AFGA, MYHG…SINV, AGWL…FLAL, and ITPI…IATL.

Belongs to the UPF0382 family.

Its subcellular location is the cell membrane. This Staphylococcus epidermidis (strain ATCC 12228 / FDA PCI 1200) protein is UPF0382 membrane protein SE_0353.